The primary structure comprises 65 residues: Metallothionein-B (65 aa).

This sequence belongs to the metallothionein superfamily. Type 4 family.

Metallothioneins have a high content of cysteine residues that bind various heavy metals. In Strongylocentrotus purpuratus (Purple sea urchin), this protein is Metallothionein-B (MTB1).